Here is a 452-residue protein sequence, read N- to C-terminus: Lipase member H (452 aa).

The N-terminal stretch at 1–16 (MLRFYLFISLLCLVRS) is a signal peptide. Residues Asn50, Asn66, and Asn122 are each glycosylated (N-linked (GlcNAc...) asparagine). The Nucleophile role is filled by Ser154. Asp178 acts as the Charge relay system in catalysis. An intrachain disulfide couples Cys233 to Cys247. His249 functions as the Charge relay system in the catalytic mechanism. Residue Asn263 is glycosylated (N-linked (GlcNAc...) asparagine). 3 cysteine pairs are disulfide-bonded: Cys271–Cys282, Cys285–Cys293, and Cys428–Cys447.

Belongs to the AB hydrolase superfamily. Lipase family. Interacts with TTMP/C3orf52. Expressed in liver and lacrimal gland.

Its subcellular location is the secreted. It localises to the cell membrane. The catalysed reaction is 1-hexadecanoyl-2-(9Z-octadecenoyl)-sn-glycero-3-phosphate + H2O = 2-(9Z-octadecenoyl)-sn-glycero-3-phosphate + hexadecanoate + H(+). In terms of biological role, hydrolyzes specifically phosphatidic acid (PA) to produce 2-acyl lysophosphatidic acid (LPA; a potent bioactive lipid mediator) and fatty acid. Does not hydrolyze other phospholipids, like phosphatidylserine (PS), phosphatidylcholine (PC) and phosphatidylethanolamine (PE) or triacylglycerol (TG). The polypeptide is Lipase member H (LIPH) (Oryctolagus cuniculus (Rabbit)).